We begin with the raw amino-acid sequence, 532 residues long: Chondroitin sulfate N-acetylgalactosaminyltransferase 1 (532 aa).

At 1–14 (MMMVRRGLLAWISR) the chain is on the cytoplasmic side. The chain crosses the membrane as a helical; Signal-anchor for type II membrane protein span at residues 15-35 (VVVLLVLLCCAISVLYMLACT). At 36 to 532 (PKGDEEQLAL…QKQKTSSKKT (497 aa)) the chain is on the lumenal side. Residues 57 to 100 (YQAVLQEWEEQHRNYVSSLKRQIAQLKEELQERSEQLRNGQYQA) are a coiled coil. N-linked (GlcNAc...) asparagine glycosylation is found at Asn-315 and Asn-324. A divalent metal cation is bound by residues Asp-360 and His-477.

It belongs to the chondroitin N-acetylgalactosaminyltransferase family. Post-translationally, N-glycosylated. As to expression, ubiquitous, with the highest levels in placenta, thyroid, bladder, prostate and adrenal gland. Detected at low levels in the other tissues examined.

The protein localises to the golgi apparatus. It is found in the golgi stack membrane. It carries out the reaction 3-O-(beta-D-GlcA-(1-&gt;3)-beta-D-Gal-(1-&gt;3)-beta-D-Gal-(1-&gt;4)-beta-D-Xyl)-L-seryl-[protein] + UDP-N-acetyl-alpha-D-galactosamine = 3-O-(beta-D-GalNAc-(1-&gt;4)-beta-D-GlcA-(1-&gt;3)-beta-D-Gal-(1-&gt;3)-beta-D-Gal-(1-&gt;4)-beta-D-Xyl)-L-seryl-[protein] + UDP + H(+). In terms of biological role, transfers 1,4-N-acetylgalactosamine (GalNAc) from UDP-GalNAc to the non-reducing end of glucuronic acid (GlcUA). Required for addition of the first GalNAc to the core tetrasaccharide linker and for elongation of chondroitin chains. Important role in chondroitin chain biosynthesis in cartilage formation and subsequent endochondral ossification. Moreover, is involved in the metabolism of aggrecan. This is Chondroitin sulfate N-acetylgalactosaminyltransferase 1 from Homo sapiens (Human).